The primary structure comprises 319 residues: 4-diphosphocytidyl-2-C-methyl-D-erythritol kinase (319 aa).

The active site involves Lys21. ATP is bound at residue 106–116 (PIGAGLAGGSS). The active site involves Asp148.

This sequence belongs to the GHMP kinase family. IspE subfamily.

The enzyme catalyses 4-CDP-2-C-methyl-D-erythritol + ATP = 4-CDP-2-C-methyl-D-erythritol 2-phosphate + ADP + H(+). It functions in the pathway isoprenoid biosynthesis; isopentenyl diphosphate biosynthesis via DXP pathway; isopentenyl diphosphate from 1-deoxy-D-xylulose 5-phosphate: step 3/6. Catalyzes the phosphorylation of the position 2 hydroxy group of 4-diphosphocytidyl-2C-methyl-D-erythritol. The polypeptide is 4-diphosphocytidyl-2-C-methyl-D-erythritol kinase (Prochlorococcus marinus (strain MIT 9303)).